The primary structure comprises 984 residues: Ubiquitin conjugation factor E4 ufd-2 (984 aa).

The 74-residue stretch at 909–982 (DVPEEFKDPI…QEWICQKRNS (74 aa)) folds into the U-box domain.

It belongs to the ubiquitin conjugation factor E4 family. Forms a complex composed of deubiquitinating enzyme atx-3, E4 ubiquitin-protein ligase ufd-2 and cdc-48.1; within the complex interacts with atx-3 and cdc-48.1 (via DDDLYN motif). Forms a complex composed of cdc-48.1, myosin chaperone unc-45, ubiquitin-protein ligases ufd-2 and chn-1; the complex targets myosin chaperone unc-45 for proteasomal degradation; within the complex interacts with cdc-48.1 (via DDDLYN motif), chn-1 and unc-45. Forms a complex composed of unc-45 and myosin heavy chain B unc-54; the complex targets unfolded unc-54 for proteasomal degradation; within the complex interacts with unc-45 (via TPR domain) and unc-54. Interacts with cdc-48.2 (via DDDLYN motif). Expressed in the germline (at protein level).

It localises to the cytoplasm. The protein localises to the nucleus membrane. The protein resides in the nucleus. It is found in the nucleolus. The catalysed reaction is S-ubiquitinyl-[E2 ubiquitin-conjugating enzyme]-L-cysteine + [acceptor protein]-L-lysine = [E2 ubiquitin-conjugating enzyme]-L-cysteine + N(6)-ubiquitinyl-[acceptor protein]-L-lysine.. It participates in protein modification; protein ubiquitination. Functionally, acts as an E4 ubiquitin ligase mediating the assembly of polyubiquitin chains on substrates ubiquitinated by another E3 ubiquitin ligase. The elongation of preexisting ubiquitin chains preferentially targets ubiquitin 'Lys-29' and 'Lys-48' residues. Also functions as an E3 ligase in conjunction with specific E1 and E2 ligases. Probably by regulating protein ubiquitination at DNA damage repair sites, coordinates DNA double-strand-break repair and apoptosis in the germline. Required for germline apoptosis in response to DNA damage downstream of cep-1. Involved in the resolution of DNA-repair sites by promoting the release of rad-51 from DNA damage foci. In association with protein-ligase chn-1, acts as an E3/E4 ligase to poly-ubiquitinate lysine residues in the UCS domain of myosin chaperone unc-45. By targeting myosin chaperone unc-45 for proteasomal degradation, regulates myosin assembly in body wall muscles in association with cdc-48.1 and chn-1. However, in a contrasting study, acts as an E3 ligase, independently of chn-1, to poly-ubiquitinate unc-45 without promoting unc-45 proteasomal degradation. Instead, uses unc-45 as an adapter protein to recruit and poly-ubiquitinate unfolded myosin heavy chain B unc-54. The chain is Ubiquitin conjugation factor E4 ufd-2 from Caenorhabditis elegans.